The sequence spans 221 residues: Sugar transporter SWEET1 (221 aa).

7 consecutive transmembrane segments (helical) span residues 3–23, 43–63, 68–88, 102–122, 129–149, 160–180, and 186–206; these read AGGVADSFLSSACVLFTLGMF, QFLPFLTTDVNNLSWLSYGVL, TLIIVNSVGAVLQTLYILAYL, ATLLAVLLLGYGYFWLLVPDL, LGLFCSVFTISMYLSPLADLA, LSFSLTIATLFCSASWSIYGF, and YITVPNLPGILTSLIRLGLFC. Positions 10 to 94 constitute a MtN3/slv 1 domain; it reads FLSSACVLFT…LAYLHYSPQK (85 aa). The 86-residue stretch at 127-212 folds into the MtN3/slv 2 domain; that stretch reads QQLGLFCSVF…GLFCKYPPEQ (86 aa). The interval 149-221 is mediates interaction with TRPV2; it reads AKIVQTKSTQ…QDRKYRLLQT (73 aa).

Belongs to the SWEET sugar transporter family. As to quaternary structure, interacts with TRPV2; the interaction probably occurs intracellularly and depends on TRPV2 N-glycosylation. Expressed at high levels in lung, placenta, spleen and thymus, at intermediate levels in brain, heart, kidney and testis, and at low levels in bone marrow, liver and lymph node. Within the thymus expression is highest in non-lymphoid cells.

The protein resides in the golgi apparatus membrane. Its subcellular location is the cell membrane. Its function is as follows. Mediates sugar transport across membranes. May regulate the expression of RAG1 a gene involved in V(D)J recombination. The protein is Sugar transporter SWEET1 (Slc50a1) of Mus musculus (Mouse).